We begin with the raw amino-acid sequence, 311 residues long: MECKRARAYSSSANLGSGFDILSIAHTAFFDTVEICVENKNLNNIIVESNSKIPLEPNKNSATYPIVKIMEEIGIKASLKVRVIKGIPEGLGLGSSGASAAAAVMAFNNLFNLNLSKEDLVRYAMYGEIASSGSPHPDNVAASVFGGVVSVVSVSPVKVVEIPINYSFDILLFTPLNVHIEEKTKKAREMVPKTVTLSDYINNSRYISSLLLGFIKGERELIRLGLNDKIVEKARLPLFPYYPKIKEVAIKYDAIGACVSGAGPSILVLTDKMTDENKIVEEGTKTCNEFNVECKVIKAKIAGGVGIEGRD.

88 to 98 contacts ATP; sequence PEGLGLGSSGA.

The protein belongs to the GHMP kinase family. Homoserine kinase subfamily.

The protein localises to the cytoplasm. It catalyses the reaction L-homoserine + ATP = O-phospho-L-homoserine + ADP + H(+). It participates in amino-acid biosynthesis; L-threonine biosynthesis; L-threonine from L-aspartate: step 4/5. Functionally, catalyzes the ATP-dependent phosphorylation of L-homoserine to L-homoserine phosphate. In Saccharolobus solfataricus (strain ATCC 35092 / DSM 1617 / JCM 11322 / P2) (Sulfolobus solfataricus), this protein is Homoserine kinase.